A 381-amino-acid chain; its full sequence is tRNA-specific 2-thiouridylase MnmA (381 aa).

ATP contacts are provided by residues 14 to 21 (AMSGGVDS) and methionine 40. Cysteine 108 (nucleophile) is an active-site residue. A disulfide bridge connects residues cysteine 108 and cysteine 205. Glycine 132 contributes to the ATP binding site. The segment at 155–157 (KDQ) is interaction with tRNA. The Cysteine persulfide intermediate role is filled by cysteine 205. The segment at 309–310 (RY) is interaction with tRNA.

It belongs to the MnmA/TRMU family.

It is found in the cytoplasm. The enzyme catalyses S-sulfanyl-L-cysteinyl-[protein] + uridine(34) in tRNA + AH2 + ATP = 2-thiouridine(34) in tRNA + L-cysteinyl-[protein] + A + AMP + diphosphate + H(+). Its function is as follows. Catalyzes the 2-thiolation of uridine at the wobble position (U34) of tRNA, leading to the formation of s(2)U34. The protein is tRNA-specific 2-thiouridylase MnmA of Deinococcus geothermalis (strain DSM 11300 / CIP 105573 / AG-3a).